An 87-amino-acid chain; its full sequence is U3-theraphotoxin-Hhn1l (87 aa).

Residues 1–24 (MVNMKASMFLTFAGLVLLFVVCYA) form the signal peptide. Positions 25–52 (SESEEKEFPKEMLSSIFAVDNDFKQEER) are excised as a propeptide. Disulfide bonds link cysteine 54/cysteine 67, cysteine 61/cysteine 72, and cysteine 66/cysteine 79.

This sequence belongs to the neurotoxin 10 (Hwtx-1) family. 51 (Hntx-8) subfamily. Hntx-8 sub-subfamily. As to expression, expressed by the venom gland.

It localises to the secreted. Functionally, ion channel inhibitor. This Cyriopagopus hainanus (Chinese bird spider) protein is U3-theraphotoxin-Hhn1l.